The chain runs to 120 residues: Phosphoribosyl-AMP cyclohydrolase (120 aa).

Aspartate 74 contacts Mg(2+). Cysteine 75 provides a ligand contact to Zn(2+). The Mg(2+) site is built by aspartate 76 and aspartate 78. Zn(2+) contacts are provided by cysteine 91 and cysteine 98.

This sequence belongs to the PRA-CH family. In terms of assembly, homodimer. Mg(2+) serves as cofactor. Zn(2+) is required as a cofactor.

Its subcellular location is the cytoplasm. It catalyses the reaction 1-(5-phospho-beta-D-ribosyl)-5'-AMP + H2O = 1-(5-phospho-beta-D-ribosyl)-5-[(5-phospho-beta-D-ribosylamino)methylideneamino]imidazole-4-carboxamide. Its pathway is amino-acid biosynthesis; L-histidine biosynthesis; L-histidine from 5-phospho-alpha-D-ribose 1-diphosphate: step 3/9. Functionally, catalyzes the hydrolysis of the adenine ring of phosphoribosyl-AMP. This chain is Phosphoribosyl-AMP cyclohydrolase, found in Natronomonas pharaonis (strain ATCC 35678 / DSM 2160 / CIP 103997 / JCM 8858 / NBRC 14720 / NCIMB 2260 / Gabara) (Halobacterium pharaonis).